A 142-amino-acid chain; its full sequence is Hemoglobin subunit alpha (142 aa).

Residues 2–142 (VLSATDKSNV…VSTVLTSKYR (141 aa)) form the Globin domain. S4 is subject to Phosphoserine. K8 and K12 each carry N6-succinyllysine. At K17 the chain carries N6-acetyllysine; alternate. An N6-succinyllysine; alternate modification is found at K17. Position 25 is a phosphotyrosine (Y25). S36 is subject to Phosphoserine. K41 is modified (N6-succinyllysine). S50 carries the phosphoserine modification. H59 lines the O2 pocket. H88 is a binding site for heme b. Residue S103 is modified to Phosphoserine. Residue T109 is modified to Phosphothreonine. Position 125 is a phosphoserine (S125). 2 positions are modified to phosphothreonine: T135 and T138. Residue S139 is modified to Phosphoserine.

It belongs to the globin family. As to quaternary structure, heterotetramer of two alpha chains and two beta chains. Red blood cells.

Involved in oxygen transport from the lung to the various peripheral tissues. In terms of biological role, hemopressin acts as an antagonist peptide of the cannabinoid receptor CNR1. Hemopressin-binding efficiently blocks cannabinoid receptor CNR1 and subsequent signaling. This is Hemoglobin subunit alpha (HBA) from Alces alces alces (European moose).